A 24-amino-acid chain; its full sequence is Erythromycin resistance leader peptide (24 aa).

Residues 1-14 are compositionally biased toward low complexity; that stretch reads MSMGIAARPPRAAL. A disordered region spans residues 1–24; it reads MSMGIAARPPRAALLPPPSVPRSR. The segment covering 15 to 24 has biased composition (pro residues); it reads LPPPSVPRSR.

Functionally, this peptide is involved in the control mechanism of the synthesis of the macrolide-lincosamide-streptogramin B resistance protein. In Streptomyces fradiae (Streptomyces roseoflavus), this protein is Erythromycin resistance leader peptide.